The chain runs to 107 residues: EPIDERMAL PATTERNING FACTOR-like protein 3 (107 aa).

A signal peptide spans 1 to 24 (MEYMFLLMSKFFFVFPIIIYIGPA). 3 cysteine pairs are disulfide-bonded: Cys-64–Cys-102, Cys-68–Cys-74, and Cys-71–Cys-104.

It belongs to the plant cysteine rich small secretory peptide family. Epidermal patterning factor subfamily.

Its subcellular location is the secreted. Controls stomatal patterning. The sequence is that of EPIDERMAL PATTERNING FACTOR-like protein 3 from Arabidopsis thaliana (Mouse-ear cress).